Consider the following 384-residue polypeptide: Galactokinase (384 aa).

Residue 34 to 37 coordinates substrate; it reads EHTD. 123–129 is a binding site for ATP; that stretch reads SSGLSSS. Mg(2+) contacts are provided by Ser129 and Glu161. Asp173 functions as the Proton acceptor in the catalytic mechanism. Residue Tyr222 coordinates substrate.

The protein belongs to the GHMP kinase family. GalK subfamily.

The protein resides in the cytoplasm. The enzyme catalyses alpha-D-galactose + ATP = alpha-D-galactose 1-phosphate + ADP + H(+). It participates in carbohydrate metabolism; galactose metabolism. Functionally, catalyzes the transfer of the gamma-phosphate of ATP to D-galactose to form alpha-D-galactose-1-phosphate (Gal-1-P). The polypeptide is Galactokinase (Haemophilus influenzae (strain PittEE)).